Here is a 540-residue protein sequence, read N- to C-terminus: Isocitrate lyase (540 aa).

103–105 (SGW) provides a ligand contact to substrate. Asp-187 contacts Mg(2+). Residue Cys-225 is the Proton acceptor of the active site. Residues 226–227 (GH), 385–389 (NNSPS), and Thr-458 contribute to the substrate site.

It belongs to the isocitrate lyase/PEP mutase superfamily. Isocitrate lyase family. In terms of assembly, homotetramer. Mg(2+) is required as a cofactor.

It catalyses the reaction D-threo-isocitrate = glyoxylate + succinate. The protein operates within carbohydrate metabolism; glyoxylate cycle; (S)-malate from isocitrate: step 1/2. Its pathway is one-carbon metabolism; formaldehyde assimilation via serine pathway. With respect to regulation, in the presence of magnesium, inhibited by oxalate, potassium cyanide, manganese, silver, cadmium and to a lesser extent by succinate, glycolate, iodoacetamide, DL-penicillamine, aluminum, sodium, potassium, lithium and strontium. In terms of biological role, involved in the metabolic adaptation in response to environmental changes. Catalyzes the reversible formation of succinate and glyoxylate from isocitrate, a key step of the glyoxylate cycle, which operates as an anaplerotic route for replenishing the tricarboxylic acid cycle during growth on fatty acid substrates. May be involved in the assimilation of one-carbon compounds via the isocitrate lyase-positive serine pathway. The sequence is that of Isocitrate lyase from Hyphomicrobium methylovorum.